The primary structure comprises 1011 residues: Rap guanine nucleotide exchange factor 4 (1011 aa).

Residues 216 to 291 form the DEP domain; it reads SRAPHMIRDR…DKYLFYRFLD (76 aa). 3',5'-cyclic AMP-binding positions include 422–425 and 432–433; these read GKLA and RA. The 139-residue stretch at 496–634 folds into the N-terminal Ras-GEF domain; sequence QKYTVMSGTP…ELEKIVKQIS (139 aa). The 238-residue stretch at 772–1009 folds into the Ras-GEF domain; that stretch reads SSKDLAYQMT…SQMSHRLEPR (238 aa).

As to quaternary structure, interacts with RAP1B, RIMS1 and RIMS2. Probably part of a complex with RIMS2 and GTP-activated RAB3A. Expressed in cerebellum, pituitary, adrenal gland and liver.

It localises to the cytoplasm. It is found in the membrane. In terms of biological role, guanine nucleotide exchange factor (GEF) for RAP1A, RAP1B and RAP2A small GTPases that is activated by binding cAMP. Seems not to activate RAB3A. Involved in cAMP-dependent, PKA-independent exocytosis through interaction with RIMS2. This Mus musculus (Mouse) protein is Rap guanine nucleotide exchange factor 4 (Rapgef4).